Reading from the N-terminus, the 319-residue chain is Ankyrin repeat domain-containing protein 1 (319 aa).

Residues 46–65 are disordered; sequence KTLPANSVKQGEEQRKSEKL. The stretch at 53–89 forms a coiled coil; sequence VKQGEEQRKSEKLREAELKKKKLEQRSKLENLEDLEI. Residues 55-65 are compositionally biased toward basic and acidic residues; the sequence is QGEEQRKSEKL. ANK repeat units follow at residues 152-181, 185-214, 218-247, 251-280, and 284-315; these read YKRT…QIEF, LEST…KISA, LLST…DLNA, EGDT…DLKV, and AGKT…KNSR.

As to quaternary structure, interacts with TTN/titin and YBX1. As to expression, expressed in heart, cardiac muscle.

Its subcellular location is the nucleus. May play an important role in endothelial cell activation. May act as a nuclear transcription factor that negatively regulates the expression of cardiac genes. The chain is Ankyrin repeat domain-containing protein 1 (Ankrd1) from Mus musculus (Mouse).